Here is a 509-residue protein sequence, read N- to C-terminus: Protein WHAT'S THIS FACTOR 1 homolog, chloroplastic (509 aa).

The transit peptide at 1–56 directs the protein to the chloroplast; sequence MDAKLLLLPFPSPPATLHHHPPPPKSLFLGASLPLLHPPPPLRLLRPGAPRRLAVV. One can recognise a PORR domain in the interval 65–393; it reads KEIPFDNVIQ…LKEKMRALVA (329 aa). Disordered stretches follow at residues 402 to 431 and 444 to 509; these read VPAT…DEDE and SGGK…RERW. Positions 461–474 are enriched in acidic residues; it reads ENDDSPPDFEDDDG.

It localises to the plastid. It is found in the chloroplast. Functionally, RNA-binding protein involved in group II intron splicing. Binds specific group II introns and promotes their splicing. Functions in the context of a heterodimer with the ribonuclease III domain-containing protein RNC1. This chain is Protein WHAT'S THIS FACTOR 1 homolog, chloroplastic, found in Oryza sativa subsp. japonica (Rice).